We begin with the raw amino-acid sequence, 630 residues long: Chaperone protein HtpG (630 aa).

Residues 1–339 (MSHTETHAFQ…SNDLPLNVSR (339 aa)) form an a; substrate-binding region. Residues 340 to 556 (EILQSNRVVD…EGDISAHMAR (217 aa)) are b. The segment at 557–630 (MMEQMGQAMP…RMNALLSEVI (74 aa)) is c.

The protein belongs to the heat shock protein 90 family. Homodimer.

The protein localises to the cytoplasm. Its function is as follows. Molecular chaperone. Has ATPase activity. The chain is Chaperone protein HtpG from Hydrogenovibrio crunogenus (strain DSM 25203 / XCL-2) (Thiomicrospira crunogena).